Here is a 484-residue protein sequence, read N- to C-terminus: Glycogen synthase 2 (484 aa).

Residue K15 coordinates ADP-alpha-D-glucose.

It belongs to the glycosyltransferase 1 family. Bacterial/plant glycogen synthase subfamily.

It carries out the reaction [(1-&gt;4)-alpha-D-glucosyl](n) + ADP-alpha-D-glucose = [(1-&gt;4)-alpha-D-glucosyl](n+1) + ADP + H(+). Its pathway is glycan biosynthesis; glycogen biosynthesis. Its function is as follows. Synthesizes alpha-1,4-glucan chains using ADP-glucose. In Geobacter metallireducens (strain ATCC 53774 / DSM 7210 / GS-15), this protein is Glycogen synthase 2.